Reading from the N-terminus, the 282-residue chain is Undecaprenyl-diphosphatase (282 aa).

7 consecutive transmembrane segments (helical) span residues 39 to 59 (PGAA…LIYF), 85 to 105 (ATMG…GLLF), 115 to 135 (SLYW…LTEV), 153 to 173 (IGWK…IPGS), 196 to 216 (FSFL…LYET), 230 to 250 (LLVA…FLIT), and 260 to 280 (FIIY…TGAI).

It belongs to the UppP family.

The protein localises to the cell inner membrane. The enzyme catalyses di-trans,octa-cis-undecaprenyl diphosphate + H2O = di-trans,octa-cis-undecaprenyl phosphate + phosphate + H(+). Catalyzes the dephosphorylation of undecaprenyl diphosphate (UPP). Confers resistance to bacitracin. The polypeptide is Undecaprenyl-diphosphatase (Chlorobium chlorochromatii (strain CaD3)).